The following is a 376-amino-acid chain: Putative F-box only protein 9 (376 aa).

In terms of domain architecture, F-box spans 1-44 (MSDLPPDLVEDILSRVPATSLKRLRFTCKQWNSLFKNRRFTEKH).

The sequence is that of Putative F-box only protein 9 (FBX9) from Arabidopsis thaliana (Mouse-ear cress).